We begin with the raw amino-acid sequence, 2183 residues long: DNA polymerase epsilon catalytic subunit A (2183 aa).

4 residues coordinate Zn(2+): Cys-2066, Cys-2069, Cys-2090, and Cys-2093. Residues 2066-2093 form a CysA-type zinc finger; sequence CFKCKNPCDLDLCKDSCCTKSGFRCPLC. Cys-2124, Cys-2127, Cys-2139, and Cys-2141 together coordinate [4Fe-4S] cluster. Residues 2124 to 2141 carry the CysB motif motif; sequence CDKCRRVKEYELTEFCPC.

Belongs to the DNA polymerase type-B family. In terms of assembly, heterotetramer. Consists of 4 subunits: POL2, DPB2, DPB3 and DPB4. [4Fe-4S] cluster serves as cofactor.

It localises to the nucleus. The enzyme catalyses DNA(n) + a 2'-deoxyribonucleoside 5'-triphosphate = DNA(n+1) + diphosphate. Functionally, DNA polymerase II participates in chromosomal DNA replication. The sequence is that of DNA polymerase epsilon catalytic subunit A (POL2) from Yarrowia lipolytica (strain CLIB 122 / E 150) (Yeast).